Consider the following 345-residue polypeptide: Nicotinate-nucleotide--dimethylbenzimidazole phosphoribosyltransferase (345 aa).

Glu-312 (proton acceptor) is an active-site residue.

It belongs to the CobT family.

It carries out the reaction 5,6-dimethylbenzimidazole + nicotinate beta-D-ribonucleotide = alpha-ribazole 5'-phosphate + nicotinate + H(+). It participates in nucleoside biosynthesis; alpha-ribazole biosynthesis; alpha-ribazole from 5,6-dimethylbenzimidazole: step 1/2. Its function is as follows. Catalyzes the synthesis of alpha-ribazole-5'-phosphate from nicotinate mononucleotide (NAMN) and 5,6-dimethylbenzimidazole (DMB). This is Nicotinate-nucleotide--dimethylbenzimidazole phosphoribosyltransferase from Bacteroides fragilis (strain YCH46).